The primary structure comprises 208 residues: Glycerol-3-phosphate acyltransferase 1 (208 aa).

The next 5 membrane-spanning stretches (helical) occupy residues 52–72, 77–97, 112–132, 140–160, and 161–181; these read VVLMDLAKGALAVSVAYYLLI, WVILTGFAAVIGHNWPIWLDF, FLLPVYGLPQHLLILALLVFI, IALATGIALFSLPFLVWYGSH, and SEFATLISVLLFLMIGIKFVL.

The protein belongs to the PlsY family. In terms of assembly, probably interacts with PlsX.

Its subcellular location is the cell membrane. The catalysed reaction is an acyl phosphate + sn-glycerol 3-phosphate = a 1-acyl-sn-glycero-3-phosphate + phosphate. The protein operates within lipid metabolism; phospholipid metabolism. Its function is as follows. Catalyzes the transfer of an acyl group from acyl-phosphate (acyl-PO(4)) to glycerol-3-phosphate (G3P) to form lysophosphatidic acid (LPA). This enzyme utilizes acyl-phosphate as fatty acyl donor, but not acyl-CoA or acyl-ACP. In Dehalococcoides mccartyi (strain ATCC BAA-2266 / KCTC 15142 / 195) (Dehalococcoides ethenogenes (strain 195)), this protein is Glycerol-3-phosphate acyltransferase 1.